The chain runs to 200 residues: Recombination protein RecR (200 aa).

Residues 58–73 form a C4-type zinc finger; it reads CSVCGNLTDTDPCFIC. The 96-residue stretch at 81-176 folds into the Toprim domain; that stretch reads DLLCVVERPR…SVTRIAHGLP (96 aa).

This sequence belongs to the RecR family.

Functionally, may play a role in DNA repair. It seems to be involved in an RecBC-independent recombinational process of DNA repair. It may act with RecF and RecO. This is Recombination protein RecR from Pelotomaculum thermopropionicum (strain DSM 13744 / JCM 10971 / SI).